Reading from the N-terminus, the 356-residue chain is GTPase Obg (356 aa).

The Obg domain occupies 1 to 159 (MKFLDEAKVY…RWIWLRMKLI (159 aa)). One can recognise an OBG-type G domain in the interval 160-327 (ADAGLVGLPN…ALRKLADVVG (168 aa)). GTP is bound by residues 166 to 173 (GLPNAGKS), 191 to 195 (FTTLH), 212 to 215 (DIPG), 279 to 282 (NKID), and 308 to 310 (SGA). Positions 173 and 193 each coordinate Mg(2+). The tract at residues 327–356 (GEQPVSSKAKNAVESAATEEPWAAPVPPQG) is disordered.

It belongs to the TRAFAC class OBG-HflX-like GTPase superfamily. OBG GTPase family. In terms of assembly, monomer. Mg(2+) serves as cofactor.

The protein resides in the cytoplasm. Its function is as follows. An essential GTPase which binds GTP, GDP and possibly (p)ppGpp with moderate affinity, with high nucleotide exchange rates and a fairly low GTP hydrolysis rate. Plays a role in control of the cell cycle, stress response, ribosome biogenesis and in those bacteria that undergo differentiation, in morphogenesis control. This Bradyrhizobium sp. (strain ORS 278) protein is GTPase Obg.